The chain runs to 86 residues: Polcalcin Nic t 2 (86 aa).

EF-hand domains lie at 8–42 (QDIADRERIFKRFDANGDGQISATELGETLQTLGS) and 43–78 (VTPEEVKYMMDEIDTNKDGFISFQEFIEFARANRGL). Ca(2+)-binding residues include Asp-21, Asn-23, Asp-25, Gln-27, Glu-32, Asp-56, Asn-58, Asp-60, and Glu-67.

The sequence is that of Polcalcin Nic t 2 (Nict2) from Nicotiana tabacum (Common tobacco).